We begin with the raw amino-acid sequence, 382 residues long: Mannitol-1-phosphate 5-dehydrogenase (382 aa).

3-14 is an NAD(+) binding site; it reads ALHFGAGNIGRG. Lysine 269 carries the post-translational modification N6-acetyllysine.

The protein belongs to the mannitol dehydrogenase family.

The enzyme catalyses D-mannitol 1-phosphate + NAD(+) = beta-D-fructose 6-phosphate + NADH + H(+). This chain is Mannitol-1-phosphate 5-dehydrogenase, found in Escherichia coli O139:H28 (strain E24377A / ETEC).